The chain runs to 323 residues: Isoeugenol synthase 1 (323 aa).

NADP(+)-binding positions include 14-17 (TGYL), 36-47 (VMPLKKNSDDSK), 88-90 (VPQ), 113-115 (SEF), Lys-135, and 155-157 (NSL). Residue Lys-135 is the Proton donor/acceptor of the active site.

It belongs to the NmrA-type oxidoreductase family. In terms of tissue distribution, expressed in flowers, especially in corolla and tubes of petals, probably in both epidermal and mesophyll cell layers.

It carries out the reaction (E)-isoeugenol + acetate + NADP(+) = (E)-coniferyl acetate + NADPH. It participates in aromatic compound metabolism; phenylpropanoid biosynthesis. With respect to regulation, inhibited by zinc and copper ions. Repressed by 4-bromo-cinnamyl acetate. In terms of biological role, involved in the biosynthesis of the floral volatile isoeugenol. Catalyzes the synthesis of the phenylpropene isoeugenol from coniferyl acetate. Phenylpropenes are the primary constituents of various essential plant oils. They are produced as antimicrobial and antianimal compounds, or as floral attractants of pollinators. Isoeugenol is a characteristic aromatic constituent of spices and a floral volatile compound. The chain is Isoeugenol synthase 1 from Petunia hybrida (Petunia).